A 172-amino-acid chain; its full sequence is NADH-quinone oxidoreductase subunit B (172 aa).

[4Fe-4S] cluster contacts are provided by C46, C47, C111, and C141.

Belongs to the complex I 20 kDa subunit family. As to quaternary structure, NDH-1 is composed of 14 different subunits. Subunits NuoB, C, D, E, F, and G constitute the peripheral sector of the complex. It depends on [4Fe-4S] cluster as a cofactor.

It is found in the cell membrane. It carries out the reaction a quinone + NADH + 5 H(+)(in) = a quinol + NAD(+) + 4 H(+)(out). Functionally, NDH-1 shuttles electrons from NADH, via FMN and iron-sulfur (Fe-S) centers, to quinones in the respiratory chain. The immediate electron acceptor for the enzyme in this species is believed to be a menaquinone. Couples the redox reaction to proton translocation (for every two electrons transferred, four hydrogen ions are translocated across the cytoplasmic membrane), and thus conserves the redox energy in a proton gradient. In Brevibacillus brevis (strain 47 / JCM 6285 / NBRC 100599), this protein is NADH-quinone oxidoreductase subunit B.